The primary structure comprises 261 residues: Carnitinyl-CoA dehydratase (261 aa).

Glutamate 111 functions as the Nucleophile in the catalytic mechanism. The Proton acceptor role is filled by glutamate 131.

The protein belongs to the enoyl-CoA hydratase/isomerase family.

It catalyses the reaction (R)-carnitinyl-CoA = crotonobetainyl-CoA + H2O. It participates in amine and polyamine metabolism; carnitine metabolism. Catalyzes the reversible dehydration of L-carnitinyl-CoA to crotonobetainyl-CoA. The protein is Carnitinyl-CoA dehydratase of Shigella flexneri.